A 219-amino-acid polypeptide reads, in one-letter code: MDPGREDEVPLAATSPESRRTRSNGRGKATVGDAPPPAETVVSTKAAPLPTGGWKKGIAILDFILRLGAIGAAMGASILMGTNEQILPFFTQFLQFHAQWDDFPVFKLFVVLNALAGGFLILSLPLSIVCIVRPLAVGPRFLLLITDLVNMATVIAAASAAAAIVYVAHNGSQDANWIAICQQFTDFCQGTSEAVVVSFVAAVFLVCLIVVSTLALKRT.

The segment at 1 to 43 (MDPGREDEVPLAATSPESRRTRSNGRGKATVGDAPPPAETVVS) is disordered. Topologically, residues 1–57 (MDPGREDEVPLAATSPESRRTRSNGRGKATVGDAPPPAETVVSTKAAPLPTGGWKKG) are cytoplasmic. A helical membrane pass occupies residues 58-78 (IAILDFILRLGAIGAAMGASI). Residues 79–108 (LMGTNEQILPFFTQFLQFHAQWDDFPVFKL) are Extracellular-facing. The chain crosses the membrane as a helical span at residues 109–129 (FVVLNALAGGFLILSLPLSIV). Over 130–147 (CIVRPLAVGPRFLLLITD) the chain is Cytoplasmic. Residues 148–168 (LVNMATVIAAASAAAAIVYVA) form a helical membrane-spanning segment. Over 169 to 193 (HNGSQDANWIAICQQFTDFCQGTSE) the chain is Extracellular. Asn170 carries N-linked (GlcNAc...) asparagine glycosylation. The chain crosses the membrane as a helical span at residues 194-214 (AVVVSFVAAVFLVCLIVVSTL). The Cytoplasmic portion of the chain corresponds to 215-219 (ALKRT).

The protein belongs to the Casparian strip membrane proteins (CASP) family. In terms of assembly, homodimer and heterodimers.

Its subcellular location is the cell membrane. In terms of biological role, regulates membrane-cell wall junctions and localized cell wall deposition. Required for establishment of the Casparian strip membrane domain (CSD) and the subsequent formation of Casparian strips, a cell wall modification of the root endodermis that determines an apoplastic barrier between the intraorganismal apoplasm and the extraorganismal apoplasm and prevents lateral diffusion. This chain is Casparian strip membrane protein 3, found in Lotus japonicus (Lotus corniculatus var. japonicus).